Reading from the N-terminus, the 161-residue chain is Small ribosomal subunit protein uS19 (161 aa).

The segment covering 1–19 (MARQKKYSGKGGARKKNKQ) has biased composition (basic residues). A disordered region spans residues 1–26 (MARQKKYSGKGGARKKNKQKQSVAPR).

It belongs to the universal ribosomal protein uS19 family.

Functionally, protein S19 forms a complex with S13 that binds strongly to the 16S ribosomal RNA. The sequence is that of Small ribosomal subunit protein uS19 from Methanococcus maripaludis (strain C7 / ATCC BAA-1331).